The primary structure comprises 269 residues: Xyloglucan endotransglucosylase/hydrolase protein 24 (269 aa).

Positions Met-1 to Ala-21 are cleaved as a signal peptide. The GH16 domain maps to Ala-22–Tyr-212. Glu-98 (nucleophile) is an active-site residue. The active-site Proton donor is the Glu-102. Residue Glu-102 coordinates xyloglucan. Asn-106 is a glycosylation site (N-linked (GlcNAc...) asparagine). Xyloglucan-binding positions include His-115–Asn-117, Asp-125–Glu-127, Asp-191–Trp-192, Gly-196, and Arg-256. Cys-251 and Cys-265 are disulfide-bonded.

The protein belongs to the glycosyl hydrolase 16 family. XTH group 2 subfamily. Post-translationally, contains at least one intrachain disulfide bond essential for its enzymatic activity. N-glycosylated; essential for its enzymatic activity. As to expression, highly expressed. Predominantly expressed in stems. Expressed in shoot apical meristems, also found in seedlings and meristems.

Its subcellular location is the secreted. It is found in the cell wall. It localises to the extracellular space. The protein localises to the apoplast. The enzyme catalyses breaks a beta-(1-&gt;4) bond in the backbone of a xyloglucan and transfers the xyloglucanyl segment on to O-4 of the non-reducing terminal glucose residue of an acceptor, which can be a xyloglucan or an oligosaccharide of xyloglucan.. Its function is as follows. Catalyzes xyloglucan endohydrolysis (XEH) and/or endotransglycosylation (XET). Cleaves and religates xyloglucan polymers, an essential constituent of the primary cell wall, and thereby participates in cell wall construction of growing tissues. May be required during development to modify the walls of cells under mechanical stress. The polypeptide is Xyloglucan endotransglucosylase/hydrolase protein 24 (XTH24) (Arabidopsis thaliana (Mouse-ear cress)).